We begin with the raw amino-acid sequence, 107 residues long: QIVLTQSPAIMSASPGQKVTMTCSASSSVSYMHWYQQKSGTSPKRWIYDTSKLASGXPARFSGSGSATSYSLTITSMQAEDAATYYCQQWSSNPLTFGAGTKLELKR.

Residues 1–23 (QIVLTQSPAIMSASPGQKVTMTC) form a framework-1 region. An intrachain disulfide couples C23 to C87. Positions 24 to 33 (SASSSVSYMH) are complementarity-determining-1. Residues 34-48 (WYQQKSGTSPKRWIY) are framework-2. Residues 49–55 (DTSKLAS) form a complementarity-determining-2 region. A framework-3 region spans residues 56–87 (GXPARFSGSGSATSYSLTITSMQAEDAATYYC). The complementarity-determining-3 stretch occupies residues 88–96 (QQWSSNPLT). The interval 97-106 (FGAGTKLELK) is framework-4.

Functionally, anti-2-phenyl oxazolone (PHOX) Antibody. This chain is Ig kappa chain V-VI region NQ6-8.3.1, found in Mus musculus (Mouse).